The primary structure comprises 581 residues: uncharacterized protein (581 aa).

S28 carries the phosphoserine modification. 11 consecutive transmembrane segments (helical) span residues 61 to 81 (LVLICLVSLVTGAIANDAGSA), 100 to 120 (AGVLFICVGYFTYLAMPATFL), 125 to 145 (CVYLVCLLFGMLGSMWFALVK), 187 to 207 (IYILSTSVGTYLGPLAAGYIA), 214 to 234 (WIGWWGLIISGITFVLFLFTF), 340 to 360 (IFLFPAVLYSGLQWGAQDAWL), 382 to 402 (AVAIMNVPCIIGATIGCIYGG), 426 to 446 (LWLMILPCIINPIGLFMFGIG), 458 to 478 (VGLGFIGFGWGCAGDISMAYL), 486 to 506 (VLEAMVGVSVINNTFGYVFTF), and 522 to 542 (ISIGVLCFIFIATSFPMILCG).

The protein belongs to the major facilitator superfamily.

It is found in the cytoplasm. Its subcellular location is the cell cortex. The protein localises to the membrane. This is an uncharacterized protein from Schizosaccharomyces pombe (strain 972 / ATCC 24843) (Fission yeast).